We begin with the raw amino-acid sequence, 869 residues long: DNA mismatch repair protein MutS (869 aa).

624–631 is a binding site for ATP; the sequence is GPNMGGKS.

The protein belongs to the DNA mismatch repair MutS family.

Its function is as follows. This protein is involved in the repair of mismatches in DNA. It is possible that it carries out the mismatch recognition step. This protein has a weak ATPase activity. The protein is DNA mismatch repair protein MutS of Solibacter usitatus (strain Ellin6076).